The primary structure comprises 71 residues: Large ribosomal subunit protein bL31 (71 aa).

The Zn(2+) site is built by Cys16, Cys18, Cys37, and Cys40.

This sequence belongs to the bacterial ribosomal protein bL31 family. Type A subfamily. In terms of assembly, part of the 50S ribosomal subunit. Zn(2+) serves as cofactor.

Its function is as follows. Binds the 23S rRNA. This chain is Large ribosomal subunit protein bL31, found in Aeromonas salmonicida (strain A449).